A 333-amino-acid chain; its full sequence is Ferrochelatase (333 aa).

The Fe cation site is built by H202 and E284.

Belongs to the ferrochelatase family.

It is found in the cytoplasm. It carries out the reaction heme b + 2 H(+) = protoporphyrin IX + Fe(2+). It functions in the pathway porphyrin-containing compound metabolism; protoheme biosynthesis; protoheme from protoporphyrin-IX: step 1/1. Catalyzes the ferrous insertion into protoporphyrin IX. The polypeptide is Ferrochelatase (Francisella tularensis subsp. novicida (strain U112)).